Here is a 573-residue protein sequence, read N- to C-terminus: DNA ligase (573 aa).

Glu-250 is an ATP binding site. Lys-252 (N6-AMP-lysine intermediate) is an active-site residue. The ATP site is built by Arg-257, Arg-272, Glu-301, Phe-342, Arg-432, and Lys-438.

This sequence belongs to the ATP-dependent DNA ligase family. The cofactor is Mg(2+).

The catalysed reaction is ATP + (deoxyribonucleotide)n-3'-hydroxyl + 5'-phospho-(deoxyribonucleotide)m = (deoxyribonucleotide)n+m + AMP + diphosphate.. Its function is as follows. DNA ligase that seals nicks in double-stranded DNA during DNA replication, DNA recombination and DNA repair. The polypeptide is DNA ligase (Methanococcus maripaludis (strain DSM 14266 / JCM 13030 / NBRC 101832 / S2 / LL)).